A 313-amino-acid polypeptide reads, in one-letter code: Probable RuBisCO transcriptional regulator (313 aa).

Residues 6 to 63 form the HTH lysR-type domain; it reads FTLDQLLILKAIAAQGSFKKAADSLYISQPAVSMQVQNIEKQLNVQLLDRGGRRANLT. The segment at residues 23–42 is a DNA-binding region (H-T-H motif); that stretch reads FKKAADSLYISQPAVSMQVQ.

It belongs to the LysR transcriptional regulatory family.

It localises to the plastid. The protein localises to the chloroplast. Functionally, trans-acting transcriptional regulator of RuBisCO genes (rbcL and rbcS) expression. This Chlorokybus atmophyticus (Soil alga) protein is Probable RuBisCO transcriptional regulator (rbcR).